Reading from the N-terminus, the 245-residue chain is MYPVDLHMHTVASTHAYSTLSDYIAEAKRKGIKLFAITDHGPDMEDAPHHWHFINMRIWPRLVDGVGILRGIEANIKNINGEIDCSGKMFDSLDLIIAGFHELVFAPHDKETNTQAMIATIASGKVHIISHPGNPKYPVEVKAVAQAAAKHHVALEINNSSFLHSRKGSEDNCRAVAAAVRDAGGWVALGSDSHTAFTLGDFTECRKILDAVDFPEDRILNVSPQRLLSFLESRGMAPVPEFAEL.

His7, His9, His15, His40, Glu73, His101, His131, Asp192, and His194 together coordinate Zn(2+).

This sequence belongs to the PHP family. In terms of assembly, homotrimer. Zn(2+) serves as cofactor.

In Salmonella arizonae (strain ATCC BAA-731 / CDC346-86 / RSK2980), this protein is Probable phosphatase YcdX.